Here is a 1081-residue protein sequence, read N- to C-terminus: Importin-4 (1081 aa).

Position 1 is an N-acetylmethionine (Met1). The Importin N-terminal domain occupies Ala24–Arg90. HEAT repeat units lie at residues Lys348–Asp385, Arg390–Pro427, Ser431–Pro471, Pro475–Ala513, Gln895–His932, and Glu936–Thr974.

This sequence belongs to the importin beta family. In terms of assembly, found in a cytosolic complex with ASF1 (ASF1A or ASF1B) and histones H3 and H4.

It localises to the cytoplasm. The protein localises to the nucleus. Nuclear transport receptor that mediates nuclear import of proteins, such as histones, RPS3A, TNP2 and VDR. Serves as receptor for nuclear localization signals (NLS) in cargo substrates. Is thought to mediate docking of the importin/substrate complex to the nuclear pore complex (NPC) through binding to nucleoporin and the complex is subsequently translocated through the pore by an energy requiring, Ran-dependent mechanism. At the nucleoplasmic side of the NPC, Ran binds to the importin, the importin/substrate complex dissociates and importin is re-exported from the nucleus to the cytoplasm where GTP hydrolysis releases Ran. The directionality of nuclear import is thought to be conferred by an asymmetric distribution of the GTP- and GDP-bound forms of Ran between the cytoplasm and nucleus. Mediates the nuclear import of the histone H3-H4 dimer when in complex with ASF1 (ASF1A or ASF1B). Mediates the ligand-independent nuclear import of vitamin D receptor (VDR). In vitro, mediates the nuclear import of human cytomegalovirus UL84 by recognizing a non-classical NLS. The chain is Importin-4 (IPO4) from Homo sapiens (Human).